Here is a 409-residue protein sequence, read N- to C-terminus: Ribose-phosphate pyrophosphokinase 1 (409 aa).

Positions 128, 130, and 143 each coordinate Mg(2+). S199 is subject to Phosphoserine.

It belongs to the ribose-phosphate pyrophosphokinase family.

Its subcellular location is the cytoplasm. The enzyme catalyses D-ribose 5-phosphate + ATP = 5-phospho-alpha-D-ribose 1-diphosphate + AMP + H(+). It functions in the pathway metabolic intermediate biosynthesis; 5-phospho-alpha-D-ribose 1-diphosphate biosynthesis; 5-phospho-alpha-D-ribose 1-diphosphate from D-ribose 5-phosphate (route I): step 1/1. 5-phosphoribose 1-diphosphate synthase involved in nucleotide, histidine, and tryptophan biosynthesis. Active in heteromultimeric complexes with other 5-phosphoribose 1-diphosphate synthases. The sequence is that of Ribose-phosphate pyrophosphokinase 1 from Schizosaccharomyces pombe (strain 972 / ATCC 24843) (Fission yeast).